A 164-amino-acid chain; its full sequence is V-type proton ATPase 16 kDa proteolipid subunit (164 aa).

Residues 1 to 10 lie on the Lumenal side of the membrane; sequence MSDLCPPTAP. A helical membrane pass occupies residues 11-31; sequence FFGFMGAAVALIFANLGAAYG. Residues 32 to 53 are Cytoplasmic-facing; sequence TAKSGVGVSSMGVMKPDLVMKS. A helical membrane pass occupies residues 54-74; it reads IIPVVMAGVLGIYGLIIAVII. The Lumenal segment spans residues 75-96; sequence GNGVKGPEGGKPQYSSFTGFAH. Residues 97–118 form a helical membrane-spanning segment; sequence LAAGLACGLSGMAAGIAIGIVG. The Cytoplasmic segment spans residues 119-130; that stretch reads DAGVRASAQQAK. A helical membrane pass occupies residues 131–155; the sequence is LYVGMVLILIFAEALGLYGLIVGLI. Over 156 to 164 the chain is Lumenal; it reads LTSKEAPCS.

It belongs to the V-ATPase proteolipid subunit family. As to quaternary structure, V-ATPase is a heteromultimeric enzyme composed of a peripheral catalytic V1 complex (main components: subunits A, B, C, D, E, and F) attached to an integral membrane V0 proton pore complex (main component: the proteolipid protein; which is present as a hexamer that forms the proton-conducting pore).

Its subcellular location is the vacuole membrane. Its function is as follows. Proton-conducting pore forming subunit of the membrane integral V0 complex of vacuolar ATPase. V-ATPase is responsible for acidifying a variety of intracellular compartments in eukaryotic cells. The polypeptide is V-type proton ATPase 16 kDa proteolipid subunit (VAP) (Chrysotila carterae (Marine alga)).